A 77-amino-acid polypeptide reads, in one-letter code: U3-theraphotoxin-Hhn1k (77 aa).

Residues Thr-1–Ala-14 form the signal peptide. The propeptide occupies Ser-15–Arg-42. Cystine bridges form between Cys-44–Cys-57 and Cys-56–Cys-69.

The protein belongs to the neurotoxin 10 (Hwtx-1) family. 51 (Hntx-8) subfamily. Hntx-8 sub-subfamily. As to expression, expressed by the venom gland.

It localises to the secreted. Ion channel inhibitor. The chain is U3-theraphotoxin-Hhn1k from Cyriopagopus hainanus (Chinese bird spider).